Reading from the N-terminus, the 679-residue chain is Dihydroxyacetone phosphate acyltransferase (679 aa).

Ser11 carries the phosphoserine modification. The short motif at 161–166 (HRSYID) is the HXXXXD motif element. Lys642 is subject to N6-acetyllysine.

The protein belongs to the GPAT/DAPAT family. Part of a heterotrimeric complex composed of GNPAT, AGPS and a modified form of GNPAT.

It is found in the peroxisome membrane. The catalysed reaction is dihydroxyacetone phosphate + an acyl-CoA = a 1-acylglycerone 3-phosphate + CoA. It carries out the reaction dihydroxyacetone phosphate + hexadecanoyl-CoA = 1-hexadecanoylglycerone 3-phosphate + CoA. The protein operates within membrane lipid metabolism; glycerophospholipid metabolism. In terms of biological role, dihydroxyacetonephosphate acyltransferase catalyzing the first step in the biosynthesis of plasmalogens, a subset of phospholipids that differ from other glycerolipids by having an alkyl chain attached through a vinyl ether linkage at the sn-1 position of the glycerol backbone, and which unique physical properties have an impact on various aspects of cell signaling and membrane biology. In Oryctolagus cuniculus (Rabbit), this protein is Dihydroxyacetone phosphate acyltransferase.